A 23-amino-acid polypeptide reads, in one-letter code: Magainin-BM2 (23 aa).

In terms of tissue distribution, expressed by the skin glands.

Its subcellular location is the secreted. Functionally, antimicrobial peptide. This is Magainin-BM2 from Xenopus boumbaensis (Mawa clawed frog).